A 429-amino-acid polypeptide reads, in one-letter code: 5-methylthioadenosine/S-adenosylhomocysteine deaminase (429 aa).

The Zn(2+) site is built by histidine 66 and histidine 68. Positions 95, 147, 158, and 181 each coordinate substrate. Histidine 208 provides a ligand contact to Zn(2+). Residues glutamate 211 and aspartate 296 each contribute to the substrate site. Aspartate 296 provides a ligand contact to Zn(2+).

This sequence belongs to the metallo-dependent hydrolases superfamily. MTA/SAH deaminase family. It depends on Zn(2+) as a cofactor.

The catalysed reaction is S-adenosyl-L-homocysteine + H2O + H(+) = S-inosyl-L-homocysteine + NH4(+). It carries out the reaction S-methyl-5'-thioadenosine + H2O + H(+) = S-methyl-5'-thioinosine + NH4(+). Its function is as follows. Catalyzes the deamination of 5-methylthioadenosine and S-adenosyl-L-homocysteine into 5-methylthioinosine and S-inosyl-L-homocysteine, respectively. Is also able to deaminate adenosine. The polypeptide is 5-methylthioadenosine/S-adenosylhomocysteine deaminase (Caldicellulosiruptor saccharolyticus (strain ATCC 43494 / DSM 8903 / Tp8T 6331)).